A 95-amino-acid polypeptide reads, in one-letter code: Large ribosomal subunit protein uL23 (95 aa).

This sequence belongs to the universal ribosomal protein uL23 family. Part of the 50S ribosomal subunit. Contacts protein L29, and trigger factor when it is bound to the ribosome.

In terms of biological role, one of the early assembly proteins it binds 23S rRNA. One of the proteins that surrounds the polypeptide exit tunnel on the outside of the ribosome. Forms the main docking site for trigger factor binding to the ribosome. This Desulforamulus reducens (strain ATCC BAA-1160 / DSM 100696 / MI-1) (Desulfotomaculum reducens) protein is Large ribosomal subunit protein uL23.